We begin with the raw amino-acid sequence, 558 residues long: Arginine--tRNA ligase (558 aa).

The short motif at 129-139 (ANPTGPLHVGH) is the 'HIGH' region element.

This sequence belongs to the class-I aminoacyl-tRNA synthetase family. In terms of assembly, monomer.

It is found in the cytoplasm. It catalyses the reaction tRNA(Arg) + L-arginine + ATP = L-arginyl-tRNA(Arg) + AMP + diphosphate. This is Arginine--tRNA ligase from Polaromonas naphthalenivorans (strain CJ2).